The following is a 142-amino-acid chain: MPTFNQLVRKGRKVIEKKSNSPALQKGFNSKKKKPTDVNSPQKRGVCTVVKTSTPKKPNSALRKVARVRLTNGIEVSAYIPGIGHNLQEHSVVLIRGGRVKDLPGVRYHIVRGTLDTAGVAKRMQARSKYGAKRPKAGAASK.

The segment at Met-1–Lys-43 is disordered. Position 102 is a 3-methylthioaspartic acid (Asp-102).

Belongs to the universal ribosomal protein uS12 family. Part of the 30S ribosomal subunit. Contacts proteins S8 and S17. May interact with IF1 in the 30S initiation complex.

Its function is as follows. With S4 and S5 plays an important role in translational accuracy. In terms of biological role, interacts with and stabilizes bases of the 16S rRNA that are involved in tRNA selection in the A site and with the mRNA backbone. Located at the interface of the 30S and 50S subunits, it traverses the body of the 30S subunit contacting proteins on the other side and probably holding the rRNA structure together. The combined cluster of proteins S8, S12 and S17 appears to hold together the shoulder and platform of the 30S subunit. This Ruminiclostridium cellulolyticum (strain ATCC 35319 / DSM 5812 / JCM 6584 / H10) (Clostridium cellulolyticum) protein is Small ribosomal subunit protein uS12.